The following is a 179-amino-acid chain: Putative ADP-ribosylation factor-like protein 5C (179 aa).

G2 is lipidated: N-myristoyl glycine. Residues 23-30 (GLDNEGKT), 66-70 (DIVRP), and 125-128 (NKQD) each bind GTP.

This sequence belongs to the small GTPase superfamily. Arf family.

In terms of biological role, binds and exchanges GTP and GDP. This chain is Putative ADP-ribosylation factor-like protein 5C (ARL5C), found in Homo sapiens (Human).